The primary structure comprises 209 residues: Large ribosomal subunit protein uL3 (209 aa).

Position 150 is an N5-methylglutamine (Gln-150).

This sequence belongs to the universal ribosomal protein uL3 family. Part of the 50S ribosomal subunit. Forms a cluster with proteins L14 and L19. Methylated by PrmB.

One of the primary rRNA binding proteins, it binds directly near the 3'-end of the 23S rRNA, where it nucleates assembly of the 50S subunit. In Buchnera aphidicola subsp. Schizaphis graminum (strain Sg), this protein is Large ribosomal subunit protein uL3.